The sequence spans 510 residues: Propionyl-CoA carboxylase beta chain (510 aa).

Residues 1-257 (MKDILQELEN…SNRTPAPVRP (257 aa)) enclose the CoA carboxyltransferase N-terminal domain. A carboxyltransferase region spans residues 1–504 (MKDILQELEN…NKKLANPWKK (504 aa)). Residues 264 to 504 (RIEDSLDTLI…NKKLANPWKK (241 aa)) enclose the CoA carboxyltransferase C-terminal domain.

The protein belongs to the AccD/PCCB family. As to quaternary structure, probably a dodecamer composed of six biotin-containing alpha subunits and six beta subunits.

It catalyses the reaction propanoyl-CoA + hydrogencarbonate + ATP = (S)-methylmalonyl-CoA + ADP + phosphate + H(+). It functions in the pathway metabolic intermediate metabolism; propanoyl-CoA degradation; succinyl-CoA from propanoyl-CoA: step 1/3. This chain is Propionyl-CoA carboxylase beta chain, found in Cereibacter sphaeroides (strain ATCC 17023 / DSM 158 / JCM 6121 / CCUG 31486 / LMG 2827 / NBRC 12203 / NCIMB 8253 / ATH 2.4.1.) (Rhodobacter sphaeroides).